Consider the following 497-residue polypeptide: Lysine--tRNA ligase (497 aa).

Mg(2+) is bound by residues Glu409 and Glu416.

The protein belongs to the class-II aminoacyl-tRNA synthetase family. As to quaternary structure, homodimer. The cofactor is Mg(2+).

It is found in the cytoplasm. It carries out the reaction tRNA(Lys) + L-lysine + ATP = L-lysyl-tRNA(Lys) + AMP + diphosphate. This Streptococcus pyogenes serotype M3 (strain ATCC BAA-595 / MGAS315) protein is Lysine--tRNA ligase.